The primary structure comprises 424 residues: Phosphomethylpyrimidine synthase (424 aa).

Substrate contacts are provided by residues M94, Y123, H162, 184–186 (SRG), 225–228 (NGMR), and E264. Residue H268 coordinates Zn(2+). Y291 serves as a coordination point for substrate. Residue H332 coordinates Zn(2+). [4Fe-4S] cluster is bound by residues C406, C409, and C413.

It belongs to the ThiC family. Requires [4Fe-4S] cluster as cofactor.

It catalyses the reaction 5-amino-1-(5-phospho-beta-D-ribosyl)imidazole + S-adenosyl-L-methionine = 4-amino-2-methyl-5-(phosphooxymethyl)pyrimidine + CO + 5'-deoxyadenosine + formate + L-methionine + 3 H(+). It participates in cofactor biosynthesis; thiamine diphosphate biosynthesis. Functionally, catalyzes the synthesis of the hydroxymethylpyrimidine phosphate (HMP-P) moiety of thiamine from aminoimidazole ribotide (AIR) in a radical S-adenosyl-L-methionine (SAM)-dependent reaction. The sequence is that of Phosphomethylpyrimidine synthase from Methanosphaerula palustris (strain ATCC BAA-1556 / DSM 19958 / E1-9c).